The following is a 382-amino-acid chain: MHINGPSGPQAYVNDSLGDGSVFPMGHGYPAEYQHMVHAHWRGFREAPIYYHAGFYIAFIVLMLSSIFGNGLVIWIFSTSKSLRTPSNLLILNLAIFDLFMCTNMPHYLINATVGYIVGGDLGCDIYALNGGISGMGASITNAFIAFDRYKTISNPIDGRLSYGQIVLLILFTWLWATPFSVLPLFQIWGRYQPEGFLTTCSFDYLTNTDENRLFVRTIFVWSYVIPMTMILVSYYKLFTHVRVHEKMLAEQAKKMNVKSLSANANADNMSVELRIAKAALIIYMLFILAWTPYSVVALIGCFGEQQLITPFVSMLPCLACKSVSCLDPWVYATSHPKYRLELERRLPWLGIREKHATSGTSGGQESVASVSGDTLALSVQN.

Topologically, residues 1-49 (MHINGPSGPQAYVNDSLGDGSVFPMGHGYPAEYQHMVHAHWRGFREAPI) are extracellular. Asn-14 carries N-linked (GlcNAc...) asparagine glycosylation. A helical membrane pass occupies residues 50-76 (YYHAGFYIAFIVLMLSSIFGNGLVIWI). Residues 77–88 (FSTSKSLRTPSN) lie on the Cytoplasmic side of the membrane. Residues 89–112 (LLILNLAIFDLFMCTNMPHYLINA) traverse the membrane as a helical segment. At 113–127 (TVGYIVGGDLGCDIY) the chain is on the extracellular side. Cysteines 124 and 201 form a disulfide. The helical transmembrane segment at 128 to 147 (ALNGGISGMGASITNAFIAF) threads the bilayer. Over 148–165 (DRYKTISNPIDGRLSYGQ) the chain is Cytoplasmic. Residues 166–190 (IVLLILFTWLWATPFSVLPLFQIWG) form a helical membrane-spanning segment. Topologically, residues 191-214 (RYQPEGFLTTCSFDYLTNTDENRL) are extracellular. Residues 215–242 (FVRTIFVWSYVIPMTMILVSYYKLFTHV) form a helical membrane-spanning segment. Residues 243 to 278 (RVHEKMLAEQAKKMNVKSLSANANADNMSVELRIAK) are Cytoplasmic-facing. A helical membrane pass occupies residues 279 to 302 (AALIIYMLFILAWTPYSVVALIGC). Over 303–310 (FGEQQLIT) the chain is Extracellular. A helical membrane pass occupies residues 311 to 335 (PFVSMLPCLACKSVSCLDPWVYATS). An N6-(retinylidene)lysine modification is found at Lys-322. Residues 336–382 (HPKYRLELERRLPWLGIREKHATSGTSGGQESVASVSGDTLALSVQN) lie on the Cytoplasmic side of the membrane. The segment at 357–382 (ATSGTSGGQESVASVSGDTLALSVQN) is disordered. Residues 358 to 382 (TSGTSGGQESVASVSGDTLALSVQN) are compositionally biased toward polar residues.

Belongs to the G-protein coupled receptor 1 family. Opsin subfamily. Phosphorylated on some or all of the serine and threonine residues present in the C-terminal region. As to expression, expressed specifically in the retina. Each Drosophila eye is composed of 800 facets or ommatidia. Each ommatidium contains 8 photoreceptor cells (R1-R8), the R1 to R6 cells are outer cells, while R7 and R8 are inner cells. Rh5 is expressed only in R8 photoreceptor cells in a subset of ommatidia.

The protein localises to the cell projection. It localises to the rhabdomere membrane. In terms of biological role, visual pigments are the light-absorbing molecules that mediate vision. They consist of an apoprotein, opsin, covalently linked to cis-retinal. The sequence is that of Opsin Rh5 (Rh5) from Drosophila melanogaster (Fruit fly).